The sequence spans 439 residues: Gnt-II system L-idonate transporter (439 aa).

Residues 1-11 (MPLIIIAAGVA) lie on the Periplasmic side of the membrane. Residues 12–34 (LLLILMIGFKVNGFIALVLVAAV) form a helical membrane-spanning segment. Topologically, residues 35-53 (VGFAEGMDAQAVLHSIQNG) are cytoplasmic. Residues 54 to 76 (IGSTLGGLAMILGFGAMLGKLIS) traverse the membrane as a helical segment. The Periplasmic portion of the chain corresponds to 77–96 (DTGAAQRIATTLIATFGKKR). A helical transmembrane segment spans residues 97–114 (VQWALVITGLVVGLAMFF). The Cytoplasmic portion of the chain corresponds to 115-118 (EVGF). A helical transmembrane segment spans residues 119 to 141 (VLLLPLVFTIVASSGLPLLYVGV). Residues 142 to 170 (PMVAALSVTHCFLPPHPGPTAIATIFEAN) lie on the Periplasmic side of the membrane. Residues 171 to 193 (LGTTLLYGFIITIPTVIVAGPLF) traverse the membrane as a helical segment. The Cytoplasmic portion of the chain corresponds to 194-218 (SKLLTRFEKAPPEGLFNPHLFSEEE). Residues 219 to 241 (MPSFWNSIFAAVIPVILMAIAAV) traverse the membrane as a helical segment. Residues 242 to 253 (CEITLPKTNTVR) lie on the Periplasmic side of the membrane. A helical transmembrane segment spans residues 254–276 (LFFEFVGNPAVALFIAIVIAIFT). Topologically, residues 277-290 (LGRRNGRTIEQIMD) are cytoplasmic. A helical transmembrane segment spans residues 291-310 (IIGDSIGAIAMIVFIIAGGG). The Periplasmic segment spans residues 311-322 (AFKQVLVDSGVG). Residues 323–345 (HYISHLMTGTTLSPLLMCWTVAA) traverse the membrane as a helical segment. The Cytoplasmic portion of the chain corresponds to 346–348 (LLR). The chain crosses the membrane as a helical span at residues 349–371 (IALGSATVAAITTAGVVLPIINV). At 372–377 (THADPA) the chain is on the periplasmic side. The chain crosses the membrane as a helical span at residues 378 to 400 (LMVLATGAGSVIASHVNDPGFWL). Over 401 to 414 (FKGYFNLTVGETLR) the chain is Cytoplasmic. Residues 415-437 (TWTVMETLISIMGLLGVLAINAV) traverse the membrane as a helical segment. Residues 438–439 (LH) are Periplasmic-facing.

The protein belongs to the GntP permease family.

It is found in the cell inner membrane. It catalyses the reaction L-idonate(in) + H(+)(in) = L-idonate(out) + H(+)(out). It carries out the reaction D-gluconate(in) + H(+)(in) = D-gluconate(out) + H(+)(out). The enzyme catalyses 5-dehydro-D-gluconate(in) + H(+)(in) = 5-dehydro-D-gluconate(out) + H(+)(out). The protein operates within carbohydrate acid metabolism; L-idonate degradation. Its function is as follows. Transporter which is probably involved in L-idonate metabolism. Transports L-idonate from the periplasm across the inner membrane. Can also transport D-gluconate and 5-keto-D-gluconate. It has been reported that gluconate uptake probably occurs via a proton-symport mechanism in E.coli. This Escherichia coli (strain K12) protein is Gnt-II system L-idonate transporter.